The chain runs to 126 residues: Nitrogenase-stabilizing/protective protein NifW (126 aa).

Residues 104–126 (VPMSEITVERPATTQTDEKGQQR) are disordered.

This sequence belongs to the NifW family. As to quaternary structure, homotrimer; associates with NifD.

May protect the nitrogenase Fe-Mo protein from oxidative damage. The chain is Nitrogenase-stabilizing/protective protein NifW from Parafrankia sp. (strain EAN1pec).